Consider the following 277-residue polypeptide: MAIKKYKPTTNGRRHMTSSDFAEITTSTPEKSLLRPLKKKAGRNNQGKLTVRHHGGGHKRQYRVIDFKRNKDGIPGRVATIEYDPNRSANIALINYADGEKRYIIAAKGLEVGQTIYSGAEADIKVGNALELKDIPVGTVIHNIEMKPGKGGQLVRSAGTSAQVLGKEGKYVLIRLNSGEVRMILATCRATIGQVGNEQHELINIGKAGRSRWMGKRPTVRGSVMNPNDHPHGGGEGKAPIGRKSPMSPWGKPTLGYKTRKKNNNSDKFIVRRRKKK.

Disordered stretches follow at residues Ile-24–Gly-55 and Arg-221–Lys-277.

It belongs to the universal ribosomal protein uL2 family. As to quaternary structure, part of the 50S ribosomal subunit. Forms a bridge to the 30S subunit in the 70S ribosome.

In terms of biological role, one of the primary rRNA binding proteins. Required for association of the 30S and 50S subunits to form the 70S ribosome, for tRNA binding and peptide bond formation. It has been suggested to have peptidyltransferase activity; this is somewhat controversial. Makes several contacts with the 16S rRNA in the 70S ribosome. This is Large ribosomal subunit protein uL2 from Listeria innocua serovar 6a (strain ATCC BAA-680 / CLIP 11262).